We begin with the raw amino-acid sequence, 580 residues long: TRAF-type zinc finger domain-containing protein 1 (580 aa).

Alanine 2 is modified (N-acetylalanine). Residues 27 to 103 (IHEIHCQRNI…DLELSVLKLK (77 aa)) form a TRAF-type zinc finger. A Phosphoserine modification is found at serine 190. The segment covering 197-209 (TTNQRSMTAQFPI) has biased composition (polar residues). The segment at 197-236 (TTNQRSMTAQFPIQNNLLEEQERQERNRSRQTPKERGEDS) is disordered. Over residues 216 to 235 (EQERQERNRSRQTPKERGED) the composition is skewed to basic and acidic residues. 3 positions are modified to phosphoserine: serine 326, serine 414, and serine 429. The tract at residues 392-580 (PATANNHVSE…GAGDAEEEEE (189 aa)) is disordered. The span at 409 to 419 (QPRETSPELPK) shows a compositional bias: basic and acidic residues. The segment covering 453-463 (PPNNTTAPPNR) has biased composition (low complexity). Residue serine 469 is modified to Phosphoserine.

Interacts with MAVS, TICAM1, TRAF1, TRAF2, TRAF3 and TRAF6.

Functionally, negative feedback regulator that controls excessive innate immune responses. Regulates both Toll-like receptor 4 (TLR4) and DDX58/RIG1-like helicases (RLH) pathways. May inhibit the LTR pathway by direct interaction with TRAF6 and attenuation of NF-kappa-B activation. May negatively regulate the RLH pathway downstream from MAVS and upstream of NF-kappa-B and IRF3. In Bos taurus (Bovine), this protein is TRAF-type zinc finger domain-containing protein 1 (TRAFD1).